Here is an 89-residue protein sequence, read N- to C-terminus: Small ribosomal subunit protein uS17 (89 aa).

This sequence belongs to the universal ribosomal protein uS17 family. Part of the 30S ribosomal subunit.

Functionally, one of the primary rRNA binding proteins, it binds specifically to the 5'-end of 16S ribosomal RNA. The sequence is that of Small ribosomal subunit protein uS17 from Polynucleobacter asymbioticus (strain DSM 18221 / CIP 109841 / QLW-P1DMWA-1) (Polynucleobacter necessarius subsp. asymbioticus).